Here is an 88-residue protein sequence, read N- to C-terminus: Large ribosomal subunit protein eL15 (88 aa).

It belongs to the eukaryotic ribosomal protein eL15 family.

The polypeptide is Large ribosomal subunit protein eL15 (RPL15) (Brassica napus (Rape)).